The following is a 486-amino-acid chain: Cobyric acid synthase (486 aa).

Residues 248–439 (VLRIVVPALP…LHGLFDTPHA (192 aa)) enclose the GATase cobBQ-type domain. Cys-328 functions as the Nucleophile in the catalytic mechanism. His-431 is an active-site residue.

The protein belongs to the CobB/CobQ family. CobQ subfamily.

It participates in cofactor biosynthesis; adenosylcobalamin biosynthesis. In terms of biological role, catalyzes amidations at positions B, D, E, and G on adenosylcobyrinic A,C-diamide. NH(2) groups are provided by glutamine, and one molecule of ATP is hydrogenolyzed for each amidation. This chain is Cobyric acid synthase, found in Burkholderia mallei (strain ATCC 23344).